Here is a 242-residue protein sequence, read N- to C-terminus: Biosynthetic peptidoglycan transglycosylase (242 aa).

A helical transmembrane segment spans residues Leu-19–Val-39.

Belongs to the glycosyltransferase 51 family.

The protein resides in the cell inner membrane. The catalysed reaction is [GlcNAc-(1-&gt;4)-Mur2Ac(oyl-L-Ala-gamma-D-Glu-L-Lys-D-Ala-D-Ala)](n)-di-trans,octa-cis-undecaprenyl diphosphate + beta-D-GlcNAc-(1-&gt;4)-Mur2Ac(oyl-L-Ala-gamma-D-Glu-L-Lys-D-Ala-D-Ala)-di-trans,octa-cis-undecaprenyl diphosphate = [GlcNAc-(1-&gt;4)-Mur2Ac(oyl-L-Ala-gamma-D-Glu-L-Lys-D-Ala-D-Ala)](n+1)-di-trans,octa-cis-undecaprenyl diphosphate + di-trans,octa-cis-undecaprenyl diphosphate + H(+). Its pathway is cell wall biogenesis; peptidoglycan biosynthesis. In terms of biological role, peptidoglycan polymerase that catalyzes glycan chain elongation from lipid-linked precursors. The polypeptide is Biosynthetic peptidoglycan transglycosylase (Escherichia coli (strain SMS-3-5 / SECEC)).